Reading from the N-terminus, the 204-residue chain is MTEKLKQGIDQLGLKVAETIQQSMLAFLAFLQKWNQAYNLTAITEIKSMITHHLLDSLSILPYLKGDKILDVGSGAGFPGIPLAFACPEKKFTLIDSKAKKTAFLLQAASRFKITNVTIIQERVGSYQPGFYFDTITCRALGSVREIMEQTNHLLRSGGQWLIMKGTYPEKELRGTDASAIVHVLNVPGLKAERHLVEVKNNKG.

Glycine 73, phenylalanine 78, and arginine 139 together coordinate S-adenosyl-L-methionine.

Belongs to the methyltransferase superfamily. RNA methyltransferase RsmG family.

The protein resides in the cytoplasm. It catalyses the reaction guanosine(527) in 16S rRNA + S-adenosyl-L-methionine = N(7)-methylguanosine(527) in 16S rRNA + S-adenosyl-L-homocysteine. Its function is as follows. Specifically methylates the N7 position of guanine in position 527 of 16S rRNA. This chain is Ribosomal RNA small subunit methyltransferase G, found in Coxiella burnetii (strain CbuG_Q212) (Coxiella burnetii (strain Q212)).